Consider the following 529-residue polypeptide: VIN3-like protein 3 (529 aa).

Positions 97-104 (PKRQKRDL) match the Nuclear localization signal motif. The segment at 137 to 207 (RCSCCICFKY…CFNCVSCGKT (71 aa)) adopts a PHD-type zinc-finger fold. The short motif at 214-221 (LKKQLIIA) is the Nuclear localization signal element. In terms of domain architecture, Fibronectin type-III spans 312–411 (GSMKIRIESV…FIVSTKTLQD (100 aa)). The interval 421–529 (MSNCNNANKM…AGVSLILLQD (109 aa)) is VIN3-Interacting Domain (VID).

In terms of assembly, interacts with VIN3.

It localises to the nucleus. Its function is as follows. Involved in both the vernalization and photoperiod pathways by regulating gene expression. This Arabidopsis thaliana (Mouse-ear cress) protein is VIN3-like protein 3 (VIL3).